The following is a 79-amino-acid chain: Cell division topological specificity factor (79 aa).

Belongs to the MinE family.

In terms of biological role, prevents the cell division inhibition by proteins MinC and MinD at internal division sites while permitting inhibition at polar sites. This ensures cell division at the proper site by restricting the formation of a division septum at the midpoint of the long axis of the cell. This chain is Cell division topological specificity factor, found in Nitratiruptor sp. (strain SB155-2).